A 356-amino-acid chain; its full sequence is Histidinol-phosphate aminotransferase (356 aa).

K214 carries the post-translational modification N6-(pyridoxal phosphate)lysine.

The protein belongs to the class-II pyridoxal-phosphate-dependent aminotransferase family. Histidinol-phosphate aminotransferase subfamily. As to quaternary structure, homodimer. Requires pyridoxal 5'-phosphate as cofactor.

It carries out the reaction L-histidinol phosphate + 2-oxoglutarate = 3-(imidazol-4-yl)-2-oxopropyl phosphate + L-glutamate. It participates in amino-acid biosynthesis; L-histidine biosynthesis; L-histidine from 5-phospho-alpha-D-ribose 1-diphosphate: step 7/9. The polypeptide is Histidinol-phosphate aminotransferase (Escherichia coli O17:K52:H18 (strain UMN026 / ExPEC)).